Consider the following 236-residue polypeptide: MVSSLANELREGTTKSHSMAENVSFVKSFLGGVVDKKSYRKLIANLYFVYSAIEEEILLNKDHPAIKPIYFTELNRKTSLAKDLNYYYGPDWLNIIEPSSATQVYVNRIHNIGNKQPELLVAHAYTRYLGDLSGGQVLKKIARGAMNLSDERGTKFYDFDEIEDDKIFKNNYRSALDTIPLSDEQVQNVVAEANISFTLNMKMFEELNSSIVKIITMIIVSTVRKFTLKSILATAD.

Residue His-17 coordinates heme b.

It belongs to the heme oxygenase family.

It is found in the plastid. It localises to the chloroplast. It carries out the reaction heme b + 3 reduced [NADPH--hemoprotein reductase] + 3 O2 = biliverdin IXalpha + CO + Fe(2+) + 3 oxidized [NADPH--hemoprotein reductase] + 3 H2O + H(+). Functionally, catalyzes the opening of the heme ring with the release of iron. Key enzyme in the synthesis of the chromophoric part of the photosynthetic antennae. This chain is Heme oxygenase (pbsA), found in Porphyra purpurea (Red seaweed).